Here is a 610-residue protein sequence, read N- to C-terminus: UvrABC system protein C (610 aa).

In terms of domain architecture, GIY-YIG spans 16 to 94 (SQPGVYRMYD…IKLYQPRYNV (79 aa)). Positions 204-239 (DQVLTQLIARMEKASQDLAFEEAARIRDQIQAVRRV) constitute a UVR domain.

The protein belongs to the UvrC family. In terms of assembly, interacts with UvrB in an incision complex.

It localises to the cytoplasm. Functionally, the UvrABC repair system catalyzes the recognition and processing of DNA lesions. UvrC both incises the 5' and 3' sides of the lesion. The N-terminal half is responsible for the 3' incision and the C-terminal half is responsible for the 5' incision. The protein is UvrABC system protein C of Salmonella gallinarum (strain 287/91 / NCTC 13346).